A 1755-amino-acid polypeptide reads, in one-letter code: E3 ubiquitin-protein ligase UBR2 (1755 aa).

The residue at position 2 (A2) is an N-acetylalanine. K94 is covalently cross-linked (Glycyl lysine isopeptide (Lys-Gly) (interchain with G-Cter in ubiquitin)). The UBR-type zinc-finger motif lies at 97-168 (HLCGRVFKVG…EGPYCQKHEL (72 aa)). The Zn(2+) site is built by C99, C112, C115, C124, C127, H133, and H136. F148 contacts a peptide. C149 serves as a coordination point for Zn(2+). An a peptide-binding site is contributed by D150. C151 lines the Zn(2+) pocket. Residue D153 coordinates a peptide. K158 is covalently cross-linked (Glycyl lysine isopeptide (Lys-Gly) (interchain with G-Cter in ubiquitin)). C163 contacts Zn(2+). Residue K165 forms a Glycyl lysine isopeptide (Lys-Gly) (interchain with G-Cter in ubiquitin) linkage. H166 is a binding site for Zn(2+). Residues K248, K255, and K470 each participate in a glycyl lysine isopeptide (Lys-Gly) (interchain with G-Cter in ubiquitin) cross-link. S476 bears the Phosphoserine mark. Residues K488, K568, K779, and K789 each participate in a glycyl lysine isopeptide (Lys-Gly) (interchain with G-Cter in ubiquitin) cross-link. The disordered stretch occupies residues 1004-1034 (ESSPTSPVAETEGTIMEESSRDKDKAERKRK). Positions 1019–1054 (MEESSRDKDKAERKRKAEIARLRREKIMAQMSEMQR) form a coiled coil. Over residues 1021–1034 (ESSRDKDKAERKRK) the composition is skewed to basic and acidic residues. C1108, C1111, C1168, H1170, H1173, C1176, C1210, and C1213 together coordinate Zn(2+). Residues 1108-1214 (CILCQEEQEV…NGEFLCPLCE (107 aa)) form an RING-type; atypical zinc finger. The interval 1261 to 1287 (RKEESTPNNASTKNSENVDELQLPEGF) is disordered. Positions 1266 to 1275 (TPNNASTKNS) are enriched in polar residues. Residues K1496, K1599, and K1689 each participate in a glycyl lysine isopeptide (Lys-Gly) (interchain with G-Cter in ubiquitin) cross-link. S1694 carries the post-translational modification Phosphoserine. Y1697 carries the phosphotyrosine modification.

This sequence belongs to the E3 ubiquitin-protein ligase UBR1-like family. In terms of assembly, interacts with UBE2B; promotes the UBE2B-H2A interaction and the ubiquitination of histone H2A by UBE2B and UBR2. Interacts with RECQL4. Interacts with TEX19; does not lead to TEX19 degradation and stabilizes it. Interacts with CASP8. Interacts with ATXN3. Interacts with UBE2O. In terms of processing, dephosphorylated by DUSP22 at Ser-1694 and Tyr-1697, leading to subsequent ubiquitination and proteasomal degradation. 'Lys-48'-linked ubiquitinated at Lys-94, Lys-779 and Lys-1599 following DUSP22-mediated dephosphorylation of Ser-1694 and Tyr-1697 which promotes UBR2 interaction with the SCF(FBW1A) E3 ubiquitin-protein ligase complex. As to expression, broadly expressed, with highest levels in skeletal muscle, kidney and pancreas. Present in acinar cells of the pancreas (at protein level).

It localises to the nucleus. It is found in the chromosome. The catalysed reaction is S-ubiquitinyl-[E2 ubiquitin-conjugating enzyme]-L-cysteine + [acceptor protein]-L-lysine = [E2 ubiquitin-conjugating enzyme]-L-cysteine + N(6)-ubiquitinyl-[acceptor protein]-L-lysine.. It participates in protein modification; protein ubiquitination. Functionally, E3 ubiquitin-protein ligase which is a component of the N-end rule pathway. Recognizes and binds to proteins bearing specific N-terminal residues (N-degrons) that are destabilizing according to the N-end rule, leading to their ubiquitination and subsequent degradation. Recognizes both type-1 and type-2 N-degrons, containing positively charged amino acids (Arg, Lys and His) and bulky and hydrophobic amino acids, respectively. Does not ubiquitinate proteins that are acetylated at the N-terminus. In contrast, it strongly binds methylated N-degrons. Plays a critical role in chromatin inactivation and chromosome-wide transcriptional silencing during meiosis via ubiquitination of histone H2A. Binds leucine and is a negative regulator of the leucine-mTOR signaling pathway, thereby controlling cell growth. Required for spermatogenesis, promotes, with Tex19.1, SPO11-dependent recombination foci to accumulate and drive robust homologous chromosome synapsis. Polyubiquitinates LINE-1 retrotransposon encoded, LIRE1, which induces degradation, inhibiting LINE-1 retrotransposon mobilization. Catalyzes ubiquitination and degradation of the N-terminal part of NLRP1 following NLRP1 activation by pathogens and other damage-associated signals: ubiquitination promotes degradation of the N-terminal part and subsequent release of the cleaved C-terminal part of NLRP1, which polymerizes and forms the NLRP1 inflammasome followed by host cell pyroptosis. Plays a role in T-cell receptor signaling by inducing 'Lys-63'-linked ubiquitination of lymphocyte cell-specific kinase LCK. This activity is regulated by DUSP22, which induces 'Lys-48'-linked ubiquitination of UBR2, leading to its proteasomal degradation by SCF E3 ubiquitin-protein ligase complex. This Homo sapiens (Human) protein is E3 ubiquitin-protein ligase UBR2 (UBR2).